Reading from the N-terminus, the 391-residue chain is Elongation factor Tu 1 (391 aa).

One can recognise a tr-type G domain in the interval 10 to 201; sequence KPHVNIGTIG…EVDNYIPTPE (192 aa). The interval 19–26 is G1; it reads GHVDHGKT. Residue 19–26 participates in GTP binding; the sequence is GHVDHGKT. Threonine 26 is a Mg(2+) binding site. The G2 stretch occupies residues 55–59; it reads GITIS. The G3 stretch occupies residues 76–79; that stretch reads DCPG. Residues 76 to 80 and 131 to 134 each bind GTP; these read DCPGH and NKVD. The tract at residues 131–134 is G4; that stretch reads NKVD. The G5 stretch occupies residues 169 to 171; that stretch reads SAL.

This sequence belongs to the TRAFAC class translation factor GTPase superfamily. Classic translation factor GTPase family. EF-Tu/EF-1A subfamily. Monomer.

It localises to the cytoplasm. The enzyme catalyses GTP + H2O = GDP + phosphate + H(+). Its function is as follows. GTP hydrolase that promotes the GTP-dependent binding of aminoacyl-tRNA to the A-site of ribosomes during protein biosynthesis. In Bartonella quintana (strain Toulouse) (Rochalimaea quintana), this protein is Elongation factor Tu 1.